The chain runs to 345 residues: Phosphoribosylformylglycinamidine cyclo-ligase (345 aa).

This sequence belongs to the AIR synthase family.

It localises to the cytoplasm. The catalysed reaction is 2-formamido-N(1)-(5-O-phospho-beta-D-ribosyl)acetamidine + ATP = 5-amino-1-(5-phospho-beta-D-ribosyl)imidazole + ADP + phosphate + H(+). The protein operates within purine metabolism; IMP biosynthesis via de novo pathway; 5-amino-1-(5-phospho-D-ribosyl)imidazole from N(2)-formyl-N(1)-(5-phospho-D-ribosyl)glycinamide: step 2/2. The chain is Phosphoribosylformylglycinamidine cyclo-ligase from Bifidobacterium longum subsp. infantis (strain ATCC 15697 / DSM 20088 / JCM 1222 / NCTC 11817 / S12).